A 233-amino-acid chain; its full sequence is Small ribosomal subunit protein uS2c (233 aa).

Belongs to the universal ribosomal protein uS2 family.

The protein localises to the plastid. It is found in the cyanelle. This is Small ribosomal subunit protein uS2c (rps2) from Cyanophora paradoxa.